The sequence spans 540 residues: Chaperonin GroEL 2 (540 aa).

ATP contacts are provided by residues threonine 30–proline 33, lysine 51, aspartate 87–threonine 91, glycine 415, asparagine 479–alanine 481, and aspartate 495.

This sequence belongs to the chaperonin (HSP60) family. In terms of assembly, forms a cylinder of 14 subunits composed of two heptameric rings stacked back-to-back. Interacts with the co-chaperonin GroES.

It localises to the cytoplasm. It catalyses the reaction ATP + H2O + a folded polypeptide = ADP + phosphate + an unfolded polypeptide.. Its function is as follows. Together with its co-chaperonin GroES, plays an essential role in assisting protein folding. The GroEL-GroES system forms a nano-cage that allows encapsulation of the non-native substrate proteins and provides a physical environment optimized to promote and accelerate protein folding. The polypeptide is Chaperonin GroEL 2 (Burkholderia vietnamiensis (strain G4 / LMG 22486) (Burkholderia cepacia (strain R1808))).